A 397-amino-acid chain; its full sequence is Elongation factor Tu (397 aa).

Residues 10-206 (KPHCNIGTIG…TIDEYVPDPE (197 aa)) form the tr-type G domain. Residues 19–26 (GHVDHGKT) form a G1 region. 19-26 (GHVDHGKT) is a binding site for GTP. Threonine 26 provides a ligand contact to Mg(2+). Residues 61 to 65 (GITIS) are G2. The tract at residues 82–85 (DCPG) is G3. Residues 82 to 86 (DCPGH) and 137 to 140 (NKCD) contribute to the GTP site. The tract at residues 137 to 140 (NKCD) is G4. The interval 175-177 (SAL) is G5.

Belongs to the TRAFAC class translation factor GTPase superfamily. Classic translation factor GTPase family. EF-Tu/EF-1A subfamily. Monomer.

It localises to the cytoplasm. The catalysed reaction is GTP + H2O = GDP + phosphate + H(+). Its function is as follows. GTP hydrolase that promotes the GTP-dependent binding of aminoacyl-tRNA to the A-site of ribosomes during protein biosynthesis. In Lachnospira eligens (strain ATCC 27750 / DSM 3376 / VPI C15-48 / C15-B4) (Eubacterium eligens), this protein is Elongation factor Tu.